An 83-amino-acid chain; its full sequence is MTEPSNADIAVMSFEDALKQLEKIVDDLERGDVPLEESIRIYERGEALKKHCDTLLKSAEDKVEKIRIGRDGQPVGTEPLDPE.

The protein belongs to the XseB family. As to quaternary structure, heterooligomer composed of large and small subunits.

It is found in the cytoplasm. The catalysed reaction is Exonucleolytic cleavage in either 5'- to 3'- or 3'- to 5'-direction to yield nucleoside 5'-phosphates.. Bidirectionally degrades single-stranded DNA into large acid-insoluble oligonucleotides, which are then degraded further into small acid-soluble oligonucleotides. The polypeptide is Exodeoxyribonuclease 7 small subunit (Brucella melitensis biotype 1 (strain ATCC 23456 / CCUG 17765 / NCTC 10094 / 16M)).